The following is a 382-amino-acid chain: Lipid-A-disaccharide synthase (382 aa).

This sequence belongs to the LpxB family.

The catalysed reaction is 2-N,3-O-bis[(3R)-3-hydroxytetradecanoyl]-alpha-D-glucosaminyl 1-phosphate + UDP-2-N,3-O-bis[(3R)-3-hydroxytetradecanoyl]-alpha-D-glucosamine = lipid A disaccharide (E. coli) + UDP + H(+). It carries out the reaction a lipid X + a UDP-2-N,3-O-bis[(3R)-3-hydroxyacyl]-alpha-D-glucosamine = a lipid A disaccharide + UDP + H(+). Its pathway is glycolipid biosynthesis; lipid IV(A) biosynthesis; lipid IV(A) from (3R)-3-hydroxytetradecanoyl-[acyl-carrier-protein] and UDP-N-acetyl-alpha-D-glucosamine: step 5/6. Functionally, condensation of UDP-2,3-diacylglucosamine and 2,3-diacylglucosamine-1-phosphate to form lipid A disaccharide, a precursor of lipid A, a phosphorylated glycolipid that anchors the lipopolysaccharide to the outer membrane of the cell. The polypeptide is Lipid-A-disaccharide synthase (Shigella boydii serotype 18 (strain CDC 3083-94 / BS512)).